A 415-amino-acid chain; its full sequence is GPI mannosyltransferase 1 (415 aa).

9 helical membrane-spanning segments follow: residues 8–28 (PSLV…YGAW), 82–102 (FFSF…WLIA), 134–154 (TRGS…WAVL), 158–178 (ITLA…PFVY), 222–242 (LLLT…MYIL), 284–304 (FESL…PIVL), 329–349 (SQYF…SSLM), 354–374 (LGIT…QQGY), and 387–407 (GLFL…GIII).

Belongs to the PIGM family.

The protein resides in the endoplasmic reticulum membrane. It participates in glycolipid biosynthesis; glycosylphosphatidylinositol-anchor biosynthesis. Functionally, mannosyltransferase involved in glycosylphosphatidylinositol-anchor biosynthesis. Transfers the first alpha-1,4-mannose to GlcN-acyl-PI during GPI precursor assembly. Required for cell wall integrity. In Aspergillus oryzae (strain ATCC 42149 / RIB 40) (Yellow koji mold), this protein is GPI mannosyltransferase 1 (gpi14).